The chain runs to 644 residues: 1,4-alpha-glucan branching enzyme GlgB (644 aa).

Asp-309 functions as the Nucleophile in the catalytic mechanism. The active-site Proton donor is Glu-362.

The protein belongs to the glycosyl hydrolase 13 family. GlgB subfamily. Monomer.

It carries out the reaction Transfers a segment of a (1-&gt;4)-alpha-D-glucan chain to a primary hydroxy group in a similar glucan chain.. Its pathway is glycan biosynthesis; glycogen biosynthesis. Catalyzes the formation of the alpha-1,6-glucosidic linkages in glycogen by scission of a 1,4-alpha-linked oligosaccharide from growing alpha-1,4-glucan chains and the subsequent attachment of the oligosaccharide to the alpha-1,6 position. This Cutibacterium acnes (strain DSM 16379 / KPA171202) (Propionibacterium acnes) protein is 1,4-alpha-glucan branching enzyme GlgB.